The following is a 103-amino-acid chain: Large ribosomal subunit protein bL21 (103 aa).

This sequence belongs to the bacterial ribosomal protein bL21 family. In terms of assembly, part of the 50S ribosomal subunit. Contacts protein L20.

Functionally, this protein binds to 23S rRNA in the presence of protein L20. This is Large ribosomal subunit protein bL21 from Acidovorax sp. (strain JS42).